A 311-amino-acid chain; its full sequence is Pyrimidine-specific ribonucleoside hydrolase RihA (311 aa).

His-240 is a catalytic residue.

This sequence belongs to the IUNH family. RihA subfamily.

Hydrolyzes with equal efficiency cytidine or uridine to ribose and cytosine or uracil, respectively. The protein is Pyrimidine-specific ribonucleoside hydrolase RihA of Escherichia coli O8 (strain IAI1).